A 359-amino-acid polypeptide reads, in one-letter code: 1-deoxy-D-xylulose 5-phosphate reductoisomerase (359 aa).

NADPH contacts are provided by threonine 12, glycine 13, serine 14, isoleucine 15, lysine 38, and asparagine 39. Lysine 105 contributes to the 1-deoxy-D-xylulose 5-phosphate binding site. Residue glutamate 106 participates in NADPH binding. Aspartate 130 provides a ligand contact to Mn(2+). 1-deoxy-D-xylulose 5-phosphate-binding residues include serine 131, glutamate 132, serine 152, and histidine 175. Glutamate 132 contributes to the Mn(2+) binding site. NADPH is bound at residue glycine 181. 1-deoxy-D-xylulose 5-phosphate-binding residues include serine 188, asparagine 193, lysine 194, and glutamate 197. Glutamate 197 contributes to the Mn(2+) binding site.

It belongs to the DXR family. Mg(2+) is required as a cofactor. Mn(2+) serves as cofactor.

The enzyme catalyses 2-C-methyl-D-erythritol 4-phosphate + NADP(+) = 1-deoxy-D-xylulose 5-phosphate + NADPH + H(+). The protein operates within isoprenoid biosynthesis; isopentenyl diphosphate biosynthesis via DXP pathway; isopentenyl diphosphate from 1-deoxy-D-xylulose 5-phosphate: step 1/6. Its function is as follows. Catalyzes the NADPH-dependent rearrangement and reduction of 1-deoxy-D-xylulose-5-phosphate (DXP) to 2-C-methyl-D-erythritol 4-phosphate (MEP). In Pseudothermotoga lettingae (strain ATCC BAA-301 / DSM 14385 / NBRC 107922 / TMO) (Thermotoga lettingae), this protein is 1-deoxy-D-xylulose 5-phosphate reductoisomerase.